The primary structure comprises 499 residues: Glycerol kinase (499 aa).

An ADP-binding site is contributed by Thr12. ATP is bound by residues Thr12, Thr13, and Ser14. Thr12 contributes to the sn-glycerol 3-phosphate binding site. Arg16 lines the ADP pocket. Sn-glycerol 3-phosphate-binding residues include Arg82, Glu83, and Tyr134. The glycerol site is built by Arg82, Glu83, and Tyr134. His230 is modified (phosphohistidine; by HPr). Position 244 (Asp244) interacts with sn-glycerol 3-phosphate. Glycerol contacts are provided by Asp244 and Gln245. The ADP site is built by Thr266 and Gly309. ATP-binding residues include Thr266, Gly309, Gln313, and Gly410. 2 residues coordinate ADP: Gly410 and Asn414.

This sequence belongs to the FGGY kinase family. As to quaternary structure, homotetramer and homodimer (in equilibrium). The phosphoenolpyruvate-dependent sugar phosphotransferase system (PTS), including enzyme I, and histidine-containing protein (HPr) are required for the phosphorylation, which leads to the activation of the enzyme.

The catalysed reaction is glycerol + ATP = sn-glycerol 3-phosphate + ADP + H(+). The protein operates within polyol metabolism; glycerol degradation via glycerol kinase pathway; sn-glycerol 3-phosphate from glycerol: step 1/1. Its activity is regulated as follows. Activated by phosphorylation and inhibited by fructose 1,6-bisphosphate (FBP). Its function is as follows. Key enzyme in the regulation of glycerol uptake and metabolism. Catalyzes the phosphorylation of glycerol to yield sn-glycerol 3-phosphate. The chain is Glycerol kinase from Staphylococcus haemolyticus (strain JCSC1435).